We begin with the raw amino-acid sequence, 137 residues long: MPNFAGTWKMKSSENFDELLRALGVNAMLRKVAVAAASKPHVEIRQDGDQFYIKTSTTVRTTEINFQVGESFQEETVDGRKCRSLATWENENKIYCKQTLIEGEGPKTYWTRELVNDELILTFGADDVVCTRIYVRE.

The short motif at 21 to 31 is the Nuclear localization signal element; sequence RALGVNAMLRK. 132–134 contributes to the all-trans-retinoate binding site; the sequence is RIY.

It belongs to the calycin superfamily. Fatty-acid binding protein (FABP) family.

The protein localises to the cytoplasm. Its function is as follows. Cytosolic CRABPs may regulate the access of retinoic acid to the nuclear retinoic acid receptors. The chain is Cellular retinoic acid-binding protein 1 (CRABP1) from Pelodiscus sinensis (Chinese softshell turtle).